A 553-amino-acid chain; its full sequence is Glucose-6-phosphate isomerase (553 aa).

Glutamate 357 serves as the catalytic Proton donor. Active-site residues include histidine 388 and lysine 514. Residues 524 to 553 form a disordered region; that stretch reads ITGAGSPPPQSDSSTDGLVRRYRTERGRAG. Over residues 541–553 the composition is skewed to basic and acidic residues; it reads LVRRYRTERGRAG.

Belongs to the GPI family.

The protein resides in the cytoplasm. It catalyses the reaction alpha-D-glucose 6-phosphate = beta-D-fructose 6-phosphate. Its pathway is carbohydrate biosynthesis; gluconeogenesis. The protein operates within carbohydrate degradation; glycolysis; D-glyceraldehyde 3-phosphate and glycerone phosphate from D-glucose: step 2/4. Functionally, catalyzes the reversible isomerization of glucose-6-phosphate to fructose-6-phosphate. The protein is Glucose-6-phosphate isomerase of Mycobacterium bovis (strain BCG / Tokyo 172 / ATCC 35737 / TMC 1019).